A 553-amino-acid polypeptide reads, in one-letter code: Muellerian-inhibiting factor (553 aa).

An N-terminal signal peptide occupies residues 1–22; the sequence is MQGPHLSLLLLLLATMGAVLQA. Positions 23–445 are excised as a propeptide; sequence DTVEELTNTR…GREGRGRAGR (423 aa). 2 N-linked (GlcNAc...) asparagine glycosylation sites follow: Asn-325 and Asn-409. Disulfide bonds link Cys-455/Cys-519, Cys-481/Cys-550, and Cys-485/Cys-552.

The protein belongs to the TGF-beta family. As to quaternary structure, homodimer; disulfide-linked. In terms of processing, preproprotein is proteolytically processed to generate N- and C-terminal cleavage products that homodimerize and associate to form a biologically active non-covalent complex. Binding of the non-covalent complex to AMHR2 induces dissociation of the pro-region from the mature C-terminal dimer. The N-terminal portion of the protein, despite having no intrinsic activity, has the role of amplifying the activity of the C-terminus. In terms of tissue distribution, mainly expressed in granulosa cells from preantral and small antral follicles.

It localises to the secreted. Functionally, plays an important role in several reproductive functions. Induces Muellerian duct regression during male fetal sexual differentiation and plays a role in Leydig cell differentiation and function. In female acts as a negative regulator of the primordial to primary follicle transition and decreases FSH sensitivity of growing follicles. AMH signals by binding to a specific type-II receptor, AMHR2, that heterodimerizes with type-I receptors (ACVR1 and BMPR1A), and recruiting SMAD proteins that are translocated to the nucleus to regulate target gene expression. The polypeptide is Muellerian-inhibiting factor (Amh) (Rattus norvegicus (Rat)).